Consider the following 801-residue polypeptide: Phenylalanine--tRNA ligase beta subunit (801 aa).

The tRNA-binding domain maps to 39–153 (AEGLSKLVVG…DEAVPGDAIF (115 aa)). The 76-residue stretch at 406-481 (TEPVEVSTNL…RIYGYDKLPT (76 aa)) folds into the B5 domain. Positions 459, 465, 468, and 469 each coordinate Mg(2+). An FDX-ACB domain is found at 708 to 801 (TKFPAMTRDI…LTEQVGAEVR (94 aa)).

It belongs to the phenylalanyl-tRNA synthetase beta subunit family. Type 1 subfamily. As to quaternary structure, tetramer of two alpha and two beta subunits. It depends on Mg(2+) as a cofactor.

The protein resides in the cytoplasm. The enzyme catalyses tRNA(Phe) + L-phenylalanine + ATP = L-phenylalanyl-tRNA(Phe) + AMP + diphosphate + H(+). The polypeptide is Phenylalanine--tRNA ligase beta subunit (Streptococcus pyogenes serotype M3 (strain SSI-1)).